We begin with the raw amino-acid sequence, 739 residues long: Poly(A) polymerase alpha (739 aa).

Positions M1–Q17 are enriched in low complexity. The tract at residues M1–T23 is disordered. S10 and S24 each carry phosphoserine. ATP contacts are provided by residues F100–S102, T109, D113–D115, D167, K228, Y237, and G246–V247. D113, D115, and D167 together coordinate Mg(2+). Glycyl lysine isopeptide (Lys-Gly) (interchain with G-Cter in SUMO) cross-links involve residues K444, K445, K506, and K507. Residues R490–K507 carry the Nuclear localization signal 1 motif. 2 disordered regions span residues V501–A565 and Q580–T700. Residues H508–V643 are ser/Thr-rich. The span at L518 to S534 shows a compositional bias: low complexity. Positions V535–N557 are enriched in polar residues. S537 carries the post-translational modification Phosphoserine; by MAPK. S558 is subject to Phosphoserine. Over residues S583–S594 the composition is skewed to low complexity. Polar residues predominate over residues I595 to I604. Low complexity predominate over residues T611–R620. N6-acetyllysine is present on residues K635 and K644. The Nuclear localization signal 2 motif lies at K644 to K659. Basic and acidic residues-rich tracts occupy residues P649–T660 and G676–L686. A required for interaction with NUDT21 region spans residues C671–R739. Residues T688–T700 are compositionally biased toward low complexity. The residue at position 730 (K730) is an N6-acetyllysine; alternate. K730 participates in a covalent cross-link: Glycyl lysine isopeptide (Lys-Gly) (interchain with G-Cter in SUMO); alternate. S732 bears the Phosphoserine mark. K734 bears the N6-acetyllysine; alternate mark. Residue K734 forms a Glycyl lysine isopeptide (Lys-Gly) (interchain with G-Cter in SUMO); alternate linkage.

Belongs to the poly(A) polymerase family. As to quaternary structure, monomer. Found in a complex with CPSF1, FIP1L1 and PAPOLA. Interacts with AHCYL1 and FIP1L1; the interaction with AHCYL1 seems to increase interaction with FIP1L1. Interacts with NUDT21; the interaction is diminished by acetylation. Interacts with KPNB1; the interaction promotes PAP nuclear import and is inhibited by acetylation of PAP. Mg(2+) serves as cofactor. The cofactor is Mn(2+). Post-translationally, polysumoylated. Varying sumoylation depending on tissue- and cell-type. Highly sumoylated in bladder and NIH 3T3 cells. Sumoylation is required for nuclear localization and enhances PAP stability. Desumoylated by SENP1. Inhibits polymerase activity. Hyperphosphorylation on multiple CDK2 consensus and non-consensus sites in the C-terminal Ser/Thr-rich region represses PAP activity in late M-phase. Phosphorylation/dephosphorylation may regulate the interaction between PAP and CPSF. In terms of processing, acetylated in the C-terminus. Acetylation decreases interaction with NUDT21 and KPNB1, and inhibits nuclear localization through inhibiting binding to the importin alpha/beta complex.

It is found in the nucleus. It catalyses the reaction RNA(n) + ATP = RNA(n)-3'-adenine ribonucleotide + diphosphate. Its function is as follows. Polymerase that creates the 3'-poly(A) tail of mRNA's. Also required for the endoribonucleolytic cleavage reaction at some polyadenylation sites. May acquire specificity through interaction with a cleavage and polyadenylation specificity factor (CPSF) at its C-terminus. This chain is Poly(A) polymerase alpha (PAPOLA), found in Bos taurus (Bovine).